The chain runs to 93 residues: DNA-directed RNA polymerase subunit omega (93 aa).

It belongs to the RNA polymerase subunit omega family. In terms of assembly, the RNAP catalytic core consists of 2 alpha, 1 beta, 1 beta' and 1 omega subunit. When a sigma factor is associated with the core the holoenzyme is formed, which can initiate transcription.

The enzyme catalyses RNA(n) + a ribonucleoside 5'-triphosphate = RNA(n+1) + diphosphate. Functionally, promotes RNA polymerase assembly. Latches the N- and C-terminal regions of the beta' subunit thereby facilitating its interaction with the beta and alpha subunits. The protein is DNA-directed RNA polymerase subunit omega of Acinetobacter baylyi (strain ATCC 33305 / BD413 / ADP1).